The sequence spans 287 residues: Bifunctional protein FolD (287 aa).

Residues 166-168 and Ile-232 each bind NADP(+); that span reads GAS.

It belongs to the tetrahydrofolate dehydrogenase/cyclohydrolase family. As to quaternary structure, homodimer.

The enzyme catalyses (6R)-5,10-methylene-5,6,7,8-tetrahydrofolate + NADP(+) = (6R)-5,10-methenyltetrahydrofolate + NADPH. The catalysed reaction is (6R)-5,10-methenyltetrahydrofolate + H2O = (6R)-10-formyltetrahydrofolate + H(+). It functions in the pathway one-carbon metabolism; tetrahydrofolate interconversion. Its function is as follows. Catalyzes the oxidation of 5,10-methylenetetrahydrofolate to 5,10-methenyltetrahydrofolate and then the hydrolysis of 5,10-methenyltetrahydrofolate to 10-formyltetrahydrofolate. This is Bifunctional protein FolD from Aeromonas salmonicida (strain A449).